The chain runs to 691 residues: Solute carrier family 28 member 3 (691 aa).

A disordered region spans residues Met1 to Gln78. The Cytoplasmic portion of the chain corresponds to Met1–Arg102. Over residues Asn21–Asn30 the composition is skewed to low complexity. Over residues Thr31–Val42 the composition is skewed to polar residues. The span at Gln43–Glu54 shows a compositional bias: basic and acidic residues. A helical transmembrane segment spans residues His103–Leu123. Residues Asn124–Ala128 are Extracellular-facing. The helical transmembrane segment at Leu129 to Ala149 threads the bilayer. Over Lys150–Leu173 the chain is Cytoplasmic. The chain crosses the membrane as a helical span at residues Lys174–Ala194. Residues Lys195–Gly197 lie on the Extracellular side of the membrane. Residues Gln198–Lys219 form a helical membrane-spanning segment. Over Tyr220–Arg227 the chain is Cytoplasmic. A helical membrane pass occupies residues Pro228–Asp247. Topologically, residues Pro248 to Phe284 are extracellular. The helical transmembrane segment at Ala285 to Leu305 threads the bilayer. Residues Gly306 to Glu329 are Cytoplasmic-facing. An intramembrane region (helical) is located at residues Ser330–Val348. The Cytoplasmic segment spans residues Arg349–His361. A helical membrane pass occupies residues Ala362 to Val384. Over Pro385 to Ser386 the chain is Extracellular. The chain crosses the membrane as a helical span at residues Ser387 to Trp408. Residues Pro409–Ser443 lie on the Cytoplasmic side of the membrane. The helical transmembrane segment at Ile444–Ser469 threads the bilayer. The Extracellular segment spans residues Trp470 to Val507. An intramembrane region (helical) is located at residues Ala508–Ser527. The Extracellular segment spans residues Lys528–Ile566. A helical membrane pass occupies residues Gly567–Thr577. Over Ser578 to Gly590 the chain is Cytoplasmic. The chain crosses the membrane as a helical span at residues Ala591–Ser613. Residues Ser614–Phe691 lie on the Extracellular side of the membrane.

This sequence belongs to the concentrative nucleoside transporter (CNT) (TC 2.A.41) family. As to quaternary structure, homotrimer. As to expression, expressed in pancreas, bone marrow, trachea, mammary gland, liver, prostate, and regions of intestine, brain, lung, placenta, testis, kidney, and heart.

Its subcellular location is the cell membrane. The protein resides in the endoplasmic reticulum membrane. The catalysed reaction is thymidine(out) + 2 Na(+)(out) = thymidine(in) + 2 Na(+)(in). It catalyses the reaction cytidine(out) + 2 Na(+)(out) = cytidine(in) + 2 Na(+)(in). It carries out the reaction uridine(out) + 2 Na(+)(out) = uridine(in) + 2 Na(+)(in). The enzyme catalyses adenosine(out) + 2 Na(+)(out) = adenosine(in) + 2 Na(+)(in). The catalysed reaction is guanosine(out) + 2 Na(+)(out) = guanosine(in) + 2 Na(+)(in). It catalyses the reaction inosine(out) + 2 Na(+)(out) = inosine(in) + 2 Na(+)(in). Functionally, sodium-dependent, pyrimidine- and purine-selective. Involved in the homeostasis of endogenous nucleosides. Exhibits the transport characteristics of the nucleoside transport system cib or N3 subtype (N3/cib) (with marked transport of both thymidine and inosine). Employs a 2:1 sodium/nucleoside ratio. Transports uridine. Also able to transport gemcitabine, 3'-azido-3'-deoxythymidine (AZT), ribavirin and 3-deazauridine. The sequence is that of Solute carrier family 28 member 3 (SLC28A3) from Homo sapiens (Human).